Here is a 106-residue protein sequence, read N- to C-terminus: Large ribosomal subunit protein uL24 (106 aa).

This sequence belongs to the universal ribosomal protein uL24 family. In terms of assembly, part of the 50S ribosomal subunit.

In terms of biological role, one of two assembly initiator proteins, it binds directly to the 5'-end of the 23S rRNA, where it nucleates assembly of the 50S subunit. Its function is as follows. One of the proteins that surrounds the polypeptide exit tunnel on the outside of the subunit. The sequence is that of Large ribosomal subunit protein uL24 from Syntrophus aciditrophicus (strain SB).